The following is a 448-amino-acid chain: Ribosomal protein uS12 methylthiotransferase RimO (448 aa).

The MTTase N-terminal domain occupies 7–123; sequence EKVSLVSLGC…IAEIIAEKEG (117 aa). [4Fe-4S] cluster contacts are provided by Cys-16, Cys-52, Cys-86, Cys-161, Cys-165, and Cys-168. The Radical SAM core domain maps to 147 to 377; the sequence is SSPYYTAYLK…MRTQARVSFK (231 aa). Positions 380 to 448 constitute a TRAM domain; the sequence is RSLVDTEELV…DYDLIGEIVP (69 aa).

Belongs to the methylthiotransferase family. RimO subfamily. [4Fe-4S] cluster serves as cofactor.

It localises to the cytoplasm. The enzyme catalyses L-aspartate(89)-[ribosomal protein uS12]-hydrogen + (sulfur carrier)-SH + AH2 + 2 S-adenosyl-L-methionine = 3-methylsulfanyl-L-aspartate(89)-[ribosomal protein uS12]-hydrogen + (sulfur carrier)-H + 5'-deoxyadenosine + L-methionine + A + S-adenosyl-L-homocysteine + 2 H(+). Its function is as follows. Catalyzes the methylthiolation of an aspartic acid residue of ribosomal protein uS12. The chain is Ribosomal protein uS12 methylthiotransferase RimO from Geotalea uraniireducens (strain Rf4) (Geobacter uraniireducens).